We begin with the raw amino-acid sequence, 306 residues long: uncharacterized protein (306 aa).

The next 8 helical transmembrane spans lie at 7-27 (LESWFFIAPALLLAVLSGYLA), 30-50 (VGIINIAINGGMVFGGLFMAL), 68-88 (LFITIPLSVLFSSVIGCLFAL), 95-115 (ADHVIVGTGINLLASGITLFI), 144-164 (AIGVFVFSLLLIGFVWYLMSF), 194-214 (IGAICSMMVAGLSGSLFVLSV), 232-252 (IAIMIISMWRIIPSIFIGLIF), and 274-294 (TIPFIISLLVMLLFGFLNVAP).

The protein localises to the cell membrane. This is an uncharacterized protein from Mycoplasma genitalium (strain ATCC 33530 / DSM 19775 / NCTC 10195 / G37) (Mycoplasmoides genitalium).